We begin with the raw amino-acid sequence, 353 residues long: Protein RecA (353 aa).

67–74 (GPESSGKT) is a binding site for ATP.

The protein belongs to the RecA family.

Its subcellular location is the cytoplasm. Can catalyze the hydrolysis of ATP in the presence of single-stranded DNA, the ATP-dependent uptake of single-stranded DNA by duplex DNA, and the ATP-dependent hybridization of homologous single-stranded DNAs. It interacts with LexA causing its activation and leading to its autocatalytic cleavage. The sequence is that of Protein RecA from Shewanella sediminis (strain HAW-EB3).